Here is a 120-residue protein sequence, read N- to C-terminus: Large ribosomal subunit protein bL20 (120 aa).

The protein belongs to the bacterial ribosomal protein bL20 family.

In terms of biological role, binds directly to 23S ribosomal RNA and is necessary for the in vitro assembly process of the 50S ribosomal subunit. It is not involved in the protein synthesizing functions of that subunit. This chain is Large ribosomal subunit protein bL20, found in Cereibacter sphaeroides (strain ATCC 17025 / ATH 2.4.3) (Rhodobacter sphaeroides).